Consider the following 1505-residue polypeptide: Phosphatidylinositol 3-kinase C2 domain-containing subunit gamma (1505 aa).

Residues 1–32 (MAYNWQTEPNRAEPQEGGHDHQQCHHADQHLS) form a disordered region. Positions 10–31 (NRAEPQEGGHDHQQCHHADQHL) are enriched in basic and acidic residues. A PI3K-RBD domain is found at 278 to 370 (PSRLFADTQF…IQLHLQRSRD (93 aa)). The C2 PI3K-type domain occupies 540–688 (LHSHLSFTVC…TPLTLQIDFP (149 aa)). One can recognise a PIK helical domain in the interval 703–879 (RTDHQEPPRE…QELLAALQFC (177 aa)). The PI3K/PI4K catalytic domain maps to 948–1226 (DRDACSYFTS…KIKQSLECFP (279 aa)). The G-loop stretch occupies residues 954 to 960 (YFTSNAL). The tract at residues 1090 to 1098 (GVCDRHNDN) is catalytic loop. The tract at residues 1109 to 1135 (HIDFGKFLGHAQTFGGIKRDRAPFIFT) is activation loop. The 113-residue stretch at 1259 to 1371 (LNKTRTIQRV…SFFLSEHIQQ (113 aa)) folds into the PX domain. The C2 domain maps to 1384–1505 (HSPDKSPQVQ…KWYPLGNSII (122 aa)).

This sequence belongs to the PI3/PI4-kinase family. Predominantly expressed in normal liver. High levels also found in regenerating liver. Very low levels found in heart and testis.

It is found in the membrane. It catalyses the reaction a 1,2-diacyl-sn-glycero-3-phospho-(1D-myo-inositol) + ATP = a 1,2-diacyl-sn-glycero-3-phospho-(1D-myo-inositol-3-phosphate) + ADP + H(+). The enzyme catalyses a 1,2-diacyl-sn-glycero-3-phospho-(1D-myo-inositol 4-phosphate) + ATP = a 1,2-diacyl-sn-glycero-3-phospho-(1D-myo-inositol-3,4-bisphosphate) + ADP + H(+). Generates phosphatidylinositol 3-phosphate (PtdIns3P) and phosphatidylinositol 3,4-bisphosphate (PtdIns(3,4)P2) that act as second messengers. May play a role in SDF1A-stimulated chemotaxis. The sequence is that of Phosphatidylinositol 3-kinase C2 domain-containing subunit gamma (Pik3c2g) from Rattus norvegicus (Rat).